The sequence spans 243 residues: rRNA adenine N-6-methyltransferase (243 aa).

N11, I13, G38, E59, D84, and N101 together coordinate S-adenosyl-L-methionine.

The protein belongs to the class I-like SAM-binding methyltransferase superfamily. rRNA adenine N(6)-methyltransferase family.

It carries out the reaction adenosine(2085) in 23S rRNA + 2 S-adenosyl-L-methionine = N(6)-dimethyladenosine(2085) in 23S rRNA + 2 S-adenosyl-L-homocysteine + 2 H(+). In terms of biological role, this protein produces a dimethylation of the adenine residue at position 2085 in 23S rRNA, resulting in reduced affinity between ribosomes and macrolide-lincosamide-streptogramin B antibiotics. The polypeptide is rRNA adenine N-6-methyltransferase (ermA1) (Staphylococcus aureus (strain Mu50 / ATCC 700699)).